A 334-amino-acid polypeptide reads, in one-letter code: Fe-S cluster assembly protein DRE2 (334 aa).

Positions 1–131 are N-terminal SAM-like domain; that stretch reads MASTKTGLVL…ASIKAEPVAV (131 aa). The linker stretch occupies residues 132 to 228; it reads PLRNHKKTTT…EDELVDENEM (97 aa). The tract at residues 135-229 is disordered; that stretch reads NHKKTTTPGT…DELVDENEMR (95 aa). Low complexity predominate over residues 140–150; that stretch reads TTPGTTTTAKK. Acidic residues-rich tracts occupy residues 182–192 and 215–227; these read DSEDEDEESEG and DSIEEDELVDENE. [2Fe-2S] cluster is bound by residues C238, C249, C252, and C254. Positions 238–254 are fe-S binding site A; that stretch reads CGKSKTRRRKACKDCTC. [4Fe-4S] cluster-binding residues include C297, C300, C308, and C311. 2 short sequence motifs (cx2C motif) span residues 297 to 300 and 308 to 311; these read CGSC and CSGC. The fe-S binding site B stretch occupies residues 297–311; that stretch reads CGSCTLGDAFRCSGC.

It belongs to the anamorsin family. In terms of assembly, monomer. Interacts with TAH18. Interacts with MIA40. [2Fe-2S] cluster serves as cofactor. [4Fe-4S] cluster is required as a cofactor.

It localises to the cytoplasm. The protein localises to the mitochondrion intermembrane space. Functionally, component of the cytosolic iron-sulfur (Fe-S) protein assembly (CIA) machinery required for the maturation of extramitochondrial Fe-S proteins. Part of an electron transfer chain functioning in an early step of cytosolic Fe-S biogenesis, facilitating the de novo assembly of a [4Fe-4S] cluster on the scaffold complex CFD1-NBP35. Electrons are transferred to DRE2 from NADPH via the FAD- and FMN-containing protein TAH18. TAH18-DRE2 are also required for the assembly of the diferric tyrosyl radical cofactor of ribonucleotide reductase (RNR), probably by providing electrons for reduction during radical cofactor maturation in the catalytic small subunit RNR2. The sequence is that of Fe-S cluster assembly protein DRE2 from Zygosaccharomyces rouxii (strain ATCC 2623 / CBS 732 / NBRC 1130 / NCYC 568 / NRRL Y-229).